A 273-amino-acid chain; its full sequence is Tryptophan synthase alpha chain (273 aa).

Catalysis depends on proton acceptor residues Glu-49 and Asp-60.

It belongs to the TrpA family. In terms of assembly, tetramer of two alpha and two beta chains.

It catalyses the reaction (1S,2R)-1-C-(indol-3-yl)glycerol 3-phosphate + L-serine = D-glyceraldehyde 3-phosphate + L-tryptophan + H2O. It participates in amino-acid biosynthesis; L-tryptophan biosynthesis; L-tryptophan from chorismate: step 5/5. The alpha subunit is responsible for the aldol cleavage of indoleglycerol phosphate to indole and glyceraldehyde 3-phosphate. The protein is Tryptophan synthase alpha chain of Thiobacillus denitrificans (strain ATCC 25259 / T1).